We begin with the raw amino-acid sequence, 428 residues long: Adenylosuccinate synthetase (428 aa).

GTP-binding positions include 12 to 18 and 40 to 42; these read GDEGKGK and GHT. The Proton acceptor role is filled by Asp13. Residues Asp13 and Gly40 each coordinate Mg(2+). IMP is bound by residues 13 to 16, 38 to 41, Thr130, Arg144, Gln225, Thr240, and Arg304; these read DEGK and NAGH. Catalysis depends on His41, which acts as the Proton donor. Residue 300–306 coordinates substrate; sequence VNTGRSR. Residues Arg306, 332 to 334, and 414 to 416 each bind GTP; these read KID and GVG.

This sequence belongs to the adenylosuccinate synthetase family. In terms of assembly, homodimer. The cofactor is Mg(2+).

It localises to the cytoplasm. It catalyses the reaction IMP + L-aspartate + GTP = N(6)-(1,2-dicarboxyethyl)-AMP + GDP + phosphate + 2 H(+). Its pathway is purine metabolism; AMP biosynthesis via de novo pathway; AMP from IMP: step 1/2. Its function is as follows. Plays an important role in the de novo pathway of purine nucleotide biosynthesis. Catalyzes the first committed step in the biosynthesis of AMP from IMP. This chain is Adenylosuccinate synthetase, found in Clostridium beijerinckii (strain ATCC 51743 / NCIMB 8052) (Clostridium acetobutylicum).